Here is a 501-residue protein sequence, read N- to C-terminus: Probable cytosol aminopeptidase (501 aa).

Mn(2+) is bound by residues Lys267 and Asp272. The active site involves Lys279. The Mn(2+) site is built by Asp290, Asp349, and Glu351. The active site involves Arg353.

Belongs to the peptidase M17 family. The cofactor is Mn(2+).

The protein resides in the cytoplasm. It catalyses the reaction Release of an N-terminal amino acid, Xaa-|-Yaa-, in which Xaa is preferably Leu, but may be other amino acids including Pro although not Arg or Lys, and Yaa may be Pro. Amino acid amides and methyl esters are also readily hydrolyzed, but rates on arylamides are exceedingly low.. The catalysed reaction is Release of an N-terminal amino acid, preferentially leucine, but not glutamic or aspartic acids.. In terms of biological role, presumably involved in the processing and regular turnover of intracellular proteins. Catalyzes the removal of unsubstituted N-terminal amino acids from various peptides. In Desulfovibrio desulfuricans (strain ATCC 27774 / DSM 6949 / MB), this protein is Probable cytosol aminopeptidase.